A 136-amino-acid polypeptide reads, in one-letter code: Large ribosomal subunit protein uL13 (136 aa).

Belongs to the universal ribosomal protein uL13 family. As to quaternary structure, part of the 50S ribosomal subunit.

Its function is as follows. This protein is one of the early assembly proteins of the 50S ribosomal subunit, although it is not seen to bind rRNA by itself. It is important during the early stages of 50S assembly. In Thermoplasma acidophilum (strain ATCC 25905 / DSM 1728 / JCM 9062 / NBRC 15155 / AMRC-C165), this protein is Large ribosomal subunit protein uL13.